Here is a 160-residue protein sequence, read N- to C-terminus: 17.9 kDa class II heat shock protein (160 aa).

The region spanning 44–160 (DARAMAATPA…KPKTIQVQVA (117 aa)) is the sHSP domain.

Belongs to the small heat shock protein (HSP20) family.

The protein localises to the cytoplasm. The polypeptide is 17.9 kDa class II heat shock protein (HSP17.9) (Helianthus annuus (Common sunflower)).